A 122-amino-acid chain; its full sequence is Large ribosomal subunit protein eL34 (122 aa).

This sequence belongs to the eukaryotic ribosomal protein eL34 family.

This chain is Large ribosomal subunit protein eL34 (rpl34), found in Dictyostelium discoideum (Social amoeba).